The following is a 381-amino-acid chain: tRNA-specific 2-thiouridylase MnmA (381 aa).

ATP is bound by residues 9–16 (GMSGGVDS) and Met35. The tract at residues 95-97 (NPD) is interaction with target base in tRNA. Residue Cys100 is the Nucleophile of the active site. An intrachain disulfide couples Cys100 to Cys196. Gly124 is a binding site for ATP. An interaction with tRNA region spans residues 146–148 (KDQ). Cys196 functions as the Cysteine persulfide intermediate in the catalytic mechanism. Residues 308–309 (RY) form an interaction with tRNA region.

The protein belongs to the MnmA/TRMU family.

It localises to the cytoplasm. It carries out the reaction S-sulfanyl-L-cysteinyl-[protein] + uridine(34) in tRNA + AH2 + ATP = 2-thiouridine(34) in tRNA + L-cysteinyl-[protein] + A + AMP + diphosphate + H(+). In terms of biological role, catalyzes the 2-thiolation of uridine at the wobble position (U34) of tRNA, leading to the formation of s(2)U34. The polypeptide is tRNA-specific 2-thiouridylase MnmA (Burkholderia multivorans (strain ATCC 17616 / 249)).